The following is a 109-amino-acid chain: uncharacterized protein (109 aa).

Residues 29 to 49 traverse the membrane as a helical segment; it reads ITIIITLVIIFIIFTLIILYF.

Its subcellular location is the membrane. This is an uncharacterized protein from Sputnik virophage.